A 1016-amino-acid chain; its full sequence is DENN domain-containing protein 1A (1016 aa).

Residues F13–V145 enclose the uDENN domain. A cDENN domain is found at E162–K298. In terms of domain architecture, dDENN spans V300–G378. The FXDXF motif signature appears at F381–F385. Residues D453–A565 form a disordered region. S473 carries the phosphoserine modification. Positions Q479 to P489 are enriched in basic and acidic residues. Basic residues predominate over residues P500 to K509. The residue at position 519 (T519) is a Phosphothreonine. 6 positions are modified to phosphoserine: S520, S522, S523, S536, S538, and S546. The Clathrin box signature appears at D569–L578. A Phosphoserine modification is found at S592. Positions L681 to E737 are disordered. S750 carries the post-translational modification Phosphoserine. R760 carries the post-translational modification Omega-N-methylarginine. Disordered regions lie at residues P763 to G783 and S935 to E1016. A compositionally biased stretch (pro residues) spans L954–S970. Composition is skewed to basic and acidic residues over residues D977–Q988 and Q1007–E1016.

Interacts with RAB35. Interacts with clathrin and with the adapter protein complex 2, AP-2. Interacts with ITSN1 and SH3GL2. Interacts (when phosphorylated) with YWHAE. Post-translationally, phosphorylated on serine and/or threonine in an Akt-dependent manner. Phosphorylation probably regulates the guanine nucleotide exchange factor (GEF) activity, possibly by disrupting an intramolecular interaction between the DENN domain and the C-terminus of the protein, thereby relieving the autoinhibition.

It is found in the cytoplasmic vesicle. Its subcellular location is the clathrin-coated vesicle membrane. The protein localises to the presynaptic cell membrane. With respect to regulation, the guanine nucleotide exchange factor (GEF) activity is autoinhibited. Autoinhibition may be the result of intramolecular interaction between the DENN domain and the C-terminus, which is disrupted upon phosphorylation. Activation is regulated by Akt activation. Functionally, guanine nucleotide exchange factor (GEF) regulating clathrin-mediated endocytosis through RAB35 activation. Promotes the exchange of GDP to GTP, converting inactive GDP-bound RAB35 into its active GTP-bound form. Regulates clathrin-mediated endocytosis of synaptic vesicles and mediates exit from early endosomes. Binds phosphatidylinositol-phosphates (PtdInsPs), with some preference for PtdIns(3)P. This Mus musculus (Mouse) protein is DENN domain-containing protein 1A (Dennd1a).